Reading from the N-terminus, the 428-residue chain is Glutamate-1-semialdehyde 2,1-aminomutase (428 aa).

Lys-265 carries the N6-(pyridoxal phosphate)lysine modification.

It belongs to the class-III pyridoxal-phosphate-dependent aminotransferase family. HemL subfamily. As to quaternary structure, homodimer. Pyridoxal 5'-phosphate serves as cofactor.

The protein resides in the cytoplasm. The catalysed reaction is (S)-4-amino-5-oxopentanoate = 5-aminolevulinate. It functions in the pathway porphyrin-containing compound metabolism; protoporphyrin-IX biosynthesis; 5-aminolevulinate from L-glutamyl-tRNA(Glu): step 2/2. The sequence is that of Glutamate-1-semialdehyde 2,1-aminomutase from Vesicomyosocius okutanii subsp. Calyptogena okutanii (strain HA).